Consider the following 57-residue polypeptide: MSRLYAIILIALVFNVIMTIMPDMKVEAVSCEDCPPHCATKDQRAKCENDKCVCEPK.

Residues 1–28 form the signal peptide; that stretch reads MSRLYAIILIALVFNVIMTIMPDMKVEA. 3 disulfide bridges follow: Cys31–Cys47, Cys34–Cys52, and Cys38–Cys54.

Expressed by the venom gland.

Its subcellular location is the secreted. Inhibits voltage-gated potassium channel rKv1.1/KCNA1 at nanomolar ranges (IC(50)=8.5 nM). This chain is Potassium channel toxin alpha-KTx 8.7, found in Mesobuthus eupeus (Lesser Asian scorpion).